We begin with the raw amino-acid sequence, 554 residues long: Hydroxylamine reductase (554 aa).

Residues C3, C6, C18, and C25 each contribute to the [2Fe-2S] cluster site. H252, E276, C320, C408, C436, C461, E495, and K497 together coordinate hybrid [4Fe-2O-2S] cluster. C408 is subject to Cysteine persulfide.

This sequence belongs to the HCP family. Requires [2Fe-2S] cluster as cofactor. It depends on hybrid [4Fe-2O-2S] cluster as a cofactor.

It localises to the cytoplasm. The catalysed reaction is A + NH4(+) + H2O = hydroxylamine + AH2 + H(+). Functionally, catalyzes the reduction of hydroxylamine to form NH(3) and H(2)O. The sequence is that of Hydroxylamine reductase from Shewanella sp. (strain MR-7).